The following is a 377-amino-acid chain: Malate dehydrogenase, cytoplasmic (377 aa).

The Pro/N-degron motif lies at 2–5; it reads PHSV. A Phosphothreonine modification is found at Thr6. NAD(+) is bound by residues 20–26 and Asp57; that span reads GAAGGIG. Residues Arg106 and Arg112 each coordinate substrate. Residues Asn119 and 144–146 each bind NAD(+); that span reads ISN. Substrate is bound by residues Asn146 and Arg185. Catalysis depends on His215, which acts as the Proton acceptor. An NAD(+)-binding site is contributed by Met266.

This sequence belongs to the LDH/MDH superfamily. MDH type 1 family. In terms of assembly, homodimer. In terms of processing, targeted for proteasomal degradation when cells are shifted to glucose-containing growth medium.

Its subcellular location is the cytoplasm. It carries out the reaction (S)-malate + NAD(+) = oxaloacetate + NADH + H(+). The isoenzyme MDH2 may function primarily in the glyoxylate cycle. This chain is Malate dehydrogenase, cytoplasmic (MDH2), found in Saccharomyces cerevisiae (strain ATCC 204508 / S288c) (Baker's yeast).